The following is a 7968-amino-acid chain: Obscurin (7968 aa).

Ig-like domains follow at residues 10-100 (PRFL…LQVD), 110-202 (PHFL…LVVD), 236-322 (PASP…QTYS), 331-414 (PAVP…RTVA), and 420-508 (GNLL…VSAP). Cysteines 31 and 82 form a disulfide. The tract at residues 228–249 (EAMRAEGAPASPPSTGTRTCTV) is disordered. Residues 240–249 (PSTGTRTCTV) are compositionally biased toward polar residues. Intrachain disulfides connect Cys259/Cys311 and Cys354/Cys404. Residue Ser395 is modified to Phosphoserine. In terms of domain architecture, Fibronectin type-III 1 spans 515–612 (PPVDPVVKAR…FPGTVHLAPK (98 aa)). Ig-like domains are found at residues 619–698 (LKAV…MEVR), 701–790 (PGLT…YQLS), 798–884 (LHKD…LRVS), 886–977 (PKVV…DVKE), 978–1066 (PKVV…FRLH), 1070–1161 (PKMM…HITE), 1162–1252 (PKGV…LHIT), 1254–1345 (PKAV…DVSE), 1346–1432 (PKAV…LSFS), 1438–1524 (PKVV…LSFH), 1530–1621 (PKAV…HVAE), and 1622–1719 (PKVV…PQIS). Disulfide bonds link Cys819-Cys870, Cys912-Cys962, Cys1004-Cys1054, Cys1096-Cys1146, Cys1188-Cys1238, Cys1280-Cys1330, Cys1372-Cys1422, Cys1464-Cys1514, Cys1556-Cys1606, Cys1648-Cys1698, Cys1723-Cys1791, and Cys1830-Cys1880. The Fibronectin type-III 2 domain occupies 1731-1808 (KEHEDIILTA…DFPVQVEEVA (78 aa)). 29 Ig-like domains span residues 1809-1894 (AKFC…LTVS), 1896-1982 (PRVV…AALR), 1987-2071 (PVLF…AKLT), 2077-2162 (VRLV…LVVT), 2165-2249 (PVSF…ASVK), 2289-2380 (PVTL…QSIT), 2468-2559 (PVVL…REVT), 2564-2643 (LQDA…LEVR), 2646-2730 (PVVF…ARVR), 2736-2823 (VGIT…LIVR), 2826-2908 (PAAI…STAS), 2920-2999 (EELT…AQLL), 3003-3092 (RRVH…LRVT), 3095-3183 (PSVF…VHAR), 3184-3268 (PVRF…ATLT), 3273-3356 (PAQF…ASLT), 3359-3444 (PMPA…ATLT), 3449-3532 (PAKF…ATLT), 3537-3620 (PARF…AMLT), 3625-3708 (PIKF…AMLT), 3713-3796 (PSKF…ATLT), 3801-3884 (PARF…ATLT), 3890-3973 (PVFR…ATLT), 3978-4062 (PVRF…ASLS), 4068-4160 (PKFK…PEVT), 4171-4239 (TADE…NHAS), 4248-4337 (PEVT…LKVT), 4340-4427 (NTVV…FLTV), and 4430-4518 (WRLE…ARLT). Disulfide bonds link Cys2187/Cys2237, Cys2311/Cys2361, and Cys2490/Cys2540. A disulfide bridge connects residues Cys2668 and Cys2718. Cystine bridges form between Cys2848/Cys2898 and Cys2937/Cys2987. Position 2889 is a phosphoserine (Ser2889). 12 disulfide bridges follow: Cys3117/Cys3167, Cys3206/Cys3256, Cys3295/Cys3344, Cys3383/Cys3432, Cys3471/Cys3520, Cys3559/Cys3608, Cys3647/Cys3696, Cys3735/Cys3784, Cys3823/Cys3872, Cys3911/Cys3961, Cys4000/Cys4050, and Cys4089/Cys4141. Ser4015 is modified (phosphoserine). Cys4453 and Cys4508 are disulfide-bonded. Residues 4525–4619 (PPEDAEVVAR…LPQTVRLAEP (95 aa)) enclose the Fibronectin type-III 3 domain. An Ig-like 47 domain is found at 4624 to 4714 (PPQPSAPESR…AAATFQVALS (91 aa)). The tract at residues 4749-4785 (MSREPTLDSISELPEEDGRSQRLPQEAEEVAPDLSEG) is disordered. Ser4750 carries the phosphoserine modification. Thr4754 carries the phosphothreonine modification. A Phosphoserine modification is found at Ser4757. The residue at position 4788 (Thr4788) is a Phosphothreonine. Ser4805 bears the Phosphoserine mark. The tract at residues 4820–4860 (LKKAGRPGTSPLASKVGAPAAPSVKPQQQQEPLAAVRPPLG) is disordered. The IQ domain maps to 4872-4901 (MDKAAVKIQAAFKGYKVRKEMKQQEGPMFS). Ig-like domains follow at residues 4898-4989 (PMFS…VVVS) and 5126-5215 (PVFL…AELR). Disulfide bonds link Cys4919/Cys4971 and Cys5147/Cys5199. A compositionally biased stretch (polar residues) spans 5238–5256 (AQGYLSSREQEGTESTTDE). The segment at 5238 to 5257 (AQGYLSSREQEGTESTTDEG) is disordered. Ig-like domains follow at residues 5260-5349 (PQVV…ARLL) and 5371-5467 (PRML…LHVS). Residues 5554–5596 (AKLQVPGGDSDEDSKTPSASPRHGRSRPSSSIQESSSESEDGD) form a disordered region. Position 5563 is a phosphoserine (Ser5563). Thr5569 is modified (phosphothreonine). The segment covering 5570–5589 (PSASPRHGRSRPSSSIQESS) has biased composition (low complexity). Residues Ser5571 and Ser5573 each carry the phosphoserine modification. One can recognise an SH3 domain in the interval 5600 to 5667 (EIFDIYVVTA…SPAYLDRRLK (68 aa)). The 185-residue stretch at 5693–5877 (RLSSVIQELL…SALPQRAENK (185 aa)) folds into the DH domain. The region spanning 5895 to 6004 (EPIRQGHFIV…WVKEICGIQQ (110 aa)) is the PH domain. Arg5975 is an a 1,2-diacyl-sn-glycero-3-phospho-(1D-myo-inositol-4,5-bisphosphate) binding site. A 1,2-diacyl-sn-glycero-3-phospho-(1D-myo-inositol-3,4-bisphosphate) is bound at residue Arg5980. Ig-like domains follow at residues 6014 to 6097 (PDFE…GNCS) and 6108 to 6200 (PRFV…LRIQ). Intrachain disulfides connect Cys6035-Cys6087 and Cys6129-Cys6182. Residues 6237–6296 (RLLGPKAPGPSTGDLTGPGPCPRGAPALQETGSQPPVTGTSEAPAVPPRVPQPLLHEGPE) form a disordered region. Positions 6266–6277 (ETGSQPPVTGTS) are enriched in polar residues. Residues 6357–6445 (PSMQVTIEDV…GQVLCKAELL (89 aa)) form the Ig-like 54 domain. In terms of domain architecture, Protein kinase 1 spans 6468 to 6721 (YEVKEEIGRG…AAQCLSHPWF (254 aa)). ATP-binding positions include 6474 to 6482 (IGRGVFGFV) and Lys6497. Asp6587 serves as the catalytic Proton acceptor. Disordered regions lie at residues 6777 to 6863 (GVAR…AQGC), 6952 to 7176 (SGTH…TMRK), and 7217 to 7272 (VSQS…TPWE). At Ser6831 the chain carries Phosphoserine. A compositionally biased stretch (pro residues) spans 7052–7061 (AVAPCPPGSF). Positions 7115-7139 (SSPGSASQASSSQVSSLRVGSSQVG) are enriched in low complexity. The segment covering 7160–7172 (DSTPTLQRPQEQA) has biased composition (polar residues). Positions 7227–7242 (EARAESQSEEQQEARA) are enriched in basic and acidic residues. Phosphoserine is present on Ser7244. The Ig-like 55 domain maps to 7463–7552 (PTFLRELSDE…GTVTTTGVLR (90 aa)). Cys7484 and Cys7536 are disulfide-bonded. The Fibronectin type-III 4 domain maps to 7557–7649 (PSSSPCPDIG…PSEQVLLGGP (93 aa)). The 253-residue stretch at 7672–7924 (FAFQTQIQRG…ASSCLQCPWL (253 aa)) folds into the Protein kinase 2 domain. Residues 7678 to 7686 (IQRGRFSVV) and Lys7701 each bind ATP. Asp7791 serves as the catalytic Proton acceptor.

Belongs to the protein kinase superfamily. CAMK Ser/Thr protein kinase family. In terms of assembly, interacts (via protein kinase domain 2) with CDH2 and (via protein kinase domain 1) with ATP1B1. Isoform 3 interacts with TTN/titin and calmodulin. Isoform 3 interacts with ANK1 isoform Mu17/ank1.5. Mg(2+) is required as a cofactor. In terms of processing, autophosphorylated by protein kinase domains 1 and 2.

The protein localises to the cytoplasm. It is found in the myofibril. Its subcellular location is the sarcomere. It localises to the m line. The protein resides in the z line. The protein localises to the cell membrane. It is found in the sarcolemma. Its subcellular location is the nucleus. The enzyme catalyses L-seryl-[protein] + ATP = O-phospho-L-seryl-[protein] + ADP + H(+). It catalyses the reaction L-threonyl-[protein] + ATP = O-phospho-L-threonyl-[protein] + ADP + H(+). In terms of biological role, structural component of striated muscles which plays a role in myofibrillogenesis. Probably involved in the assembly of myosin into sarcomeric A bands in striated muscle. Has serine/threonine protein kinase activity and phosphorylates N-cadherin CDH2 and sodium/potassium-transporting ATPase subunit ATP1B1. Binds (via the PH domain) strongly to phosphatidylinositol 3,4-bisphosphate (PtdIns(3,4)P2) and phosphatidylinositol 4,5-bisphosphate (PtdIns(4,5)P2), and to a lesser extent to phosphatidylinositol 3-phosphate (PtdIns(3)P), phosphatidylinositol 4-phosphate (PtdIns(4)P), phosphatidylinositol 5-phosphate (PtdIns(5)P) and phosphatidylinositol 3,4,5-trisphosphate (PtdIns(3,4,5)P3). This Homo sapiens (Human) protein is Obscurin (OBSCN).